We begin with the raw amino-acid sequence, 375 residues long: 1-deoxy-D-xylulose 5-phosphate reductoisomerase (375 aa).

NADPH-binding residues include threonine 12, glycine 13, serine 14, isoleucine 15, asparagine 39, and asparagine 115. A 1-deoxy-D-xylulose 5-phosphate-binding site is contributed by lysine 116. Glutamate 117 contributes to the NADPH binding site. Residue aspartate 141 participates in Mn(2+) binding. Positions 142, 143, 163, and 186 each coordinate 1-deoxy-D-xylulose 5-phosphate. A Mn(2+)-binding site is contributed by glutamate 143. Glycine 192 is an NADPH binding site. Serine 199, asparagine 204, lysine 205, and glutamate 208 together coordinate 1-deoxy-D-xylulose 5-phosphate. Glutamate 208 contributes to the Mn(2+) binding site.

Belongs to the DXR family. Mg(2+) serves as cofactor. Mn(2+) is required as a cofactor.

It carries out the reaction 2-C-methyl-D-erythritol 4-phosphate + NADP(+) = 1-deoxy-D-xylulose 5-phosphate + NADPH + H(+). It functions in the pathway isoprenoid biosynthesis; isopentenyl diphosphate biosynthesis via DXP pathway; isopentenyl diphosphate from 1-deoxy-D-xylulose 5-phosphate: step 1/6. Catalyzes the NADPH-dependent rearrangement and reduction of 1-deoxy-D-xylulose-5-phosphate (DXP) to 2-C-methyl-D-erythritol 4-phosphate (MEP). This Thermotoga neapolitana (strain ATCC 49049 / DSM 4359 / NBRC 107923 / NS-E) protein is 1-deoxy-D-xylulose 5-phosphate reductoisomerase.